The primary structure comprises 576 residues: Glutamine-dependent NAD(+) synthetase (576 aa).

A CN hydrolase domain is found at 4–246 (LRVTLAQLNP…EEIITVDLDL (243 aa)). The Proton acceptor; for glutaminase activity role is filled by E44. K112 functions as the For glutaminase activity in the catalytic mechanism. Y118 contacts L-glutamine. The active-site Nucleophile; for glutaminase activity is the C148. Residues S176 and K182 each coordinate L-glutamine. Residues 292-576 (PVREEEMFRA…PITNRFKEPL (285 aa)) form a ligase region. Residue 321–328 (GLSGGMDS) participates in ATP binding. N404 contacts deamido-NAD(+). T428 serves as a coordination point for ATP. Residues E433 and K545 each contribute to the deamido-NAD(+) site.

In the C-terminal section; belongs to the NAD synthetase family.

It carries out the reaction deamido-NAD(+) + L-glutamine + ATP + H2O = L-glutamate + AMP + diphosphate + NAD(+) + H(+). It participates in cofactor biosynthesis; NAD(+) biosynthesis; NAD(+) from deamido-NAD(+) (L-Gln route): step 1/1. Its function is as follows. Catalyzes the ATP-dependent amidation of deamido-NAD to form NAD. Uses L-glutamine as a nitrogen source. The protein is Glutamine-dependent NAD(+) synthetase (nadE2) of Thermotoga maritima (strain ATCC 43589 / DSM 3109 / JCM 10099 / NBRC 100826 / MSB8).